Consider the following 460-residue polypeptide: Carboxypeptidase DacB (460 aa).

Residues 1–28 (MRPTRWRRSTHVAVGVAVLALVVAVVAA) form the signal peptide. The segment at 39–64 (AAEAVPPAPPPATADPGVVPVDLSAP) is disordered. S113 acts as the Acyl-ester intermediate in catalysis. The Proton acceptor role is filled by K116. S294 is an active-site residue.

The protein belongs to the peptidase S13 family.

Its function is as follows. Carboxypeptidase that cleaves terminal D-alanine from peptidoglycan in the mycobacterial cell wall. May cleave L-Lys-D-Ala and/or D-Ala-D-Ala peptide bonds. Exerts important effects on mycobacterial cell morphology and cell division. This chain is Carboxypeptidase DacB, found in Mycolicibacterium smegmatis (strain ATCC 700084 / mc(2)155) (Mycobacterium smegmatis).